We begin with the raw amino-acid sequence, 155 residues long: Myosin light chain alkali (155 aa).

2 consecutive EF-hand domains span residues 7-41 (REVE…LNLN) and 80-115 (GCYE…LGES).

In terms of assembly, myosin is a hexamer of 2 heavy chains and 4 light chains.

The polypeptide is Myosin light chain alkali (Mlc1) (Drosophila virilis (Fruit fly)).